The sequence spans 909 residues: Phosphoenolpyruvate carboxylase (909 aa).

Active-site residues include His-138 and Lys-572.

Belongs to the PEPCase type 1 family. Requires Mg(2+) as cofactor.

The catalysed reaction is oxaloacetate + phosphate = phosphoenolpyruvate + hydrogencarbonate. Forms oxaloacetate, a four-carbon dicarboxylic acid source for the tricarboxylic acid cycle. This chain is Phosphoenolpyruvate carboxylase, found in Lactobacillus delbrueckii subsp. bulgaricus (strain ATCC 11842 / DSM 20081 / BCRC 10696 / JCM 1002 / NBRC 13953 / NCIMB 11778 / NCTC 12712 / WDCM 00102 / Lb 14).